Reading from the N-terminus, the 89-residue chain is Small ribosomal subunit protein uS17 (89 aa).

Belongs to the universal ribosomal protein uS17 family. In terms of assembly, part of the 30S ribosomal subunit.

Its function is as follows. One of the primary rRNA binding proteins, it binds specifically to the 5'-end of 16S ribosomal RNA. The polypeptide is Small ribosomal subunit protein uS17 (Variovorax paradoxus (strain S110)).